We begin with the raw amino-acid sequence, 219 residues long: Ras-related protein Rab-3B (219 aa).

Ala-2 bears the N-acetylalanine mark. Residues Ser-31, Ser-32, Val-33, Gly-34, Lys-35, Thr-36, Ser-37, Pro-49, and Ser-53 each contribute to the GTP site. Residue Thr-36 coordinates Mg(2+). A Switch 1 motif is present at residues 45–58 (DTFTPAFVSTVGID). Positions 54 and 77 each coordinate Mg(2+). The Switch 2 motif lies at 78–96 (TAGQERYRTITTAYYRGAM). A GTP-binding site is contributed by Gly-80. Phosphothreonine is present on Thr-86. The GTP site is built by Asn-135, Lys-136, Asp-138, Ala-166, and Lys-167. A Phosphoserine modification is found at Ser-188. S-geranylgeranyl cysteine attachment occurs at residues Cys-217 and Cys-219. Residue Cys-219 is modified to Cysteine methyl ester.

It belongs to the small GTPase superfamily. Rab family. Interacts with RIMS1, RIMS2, RPH3A and RPH3AL. The GTP-bound form interacts with GAS8/DRC4 (via coiled-coil domains). Interacts with GDI2, CHM and CHML; phosphorylation at Thr-86 disrupts these interactions. Interacts with MADD (via uDENN domain); the GTP-bound form is preferred for interaction. Mg(2+) is required as a cofactor. In terms of processing, phosphorylation of Thr-86 in the switch II region by LRRK2 prevents the association of RAB regulatory proteins, including CHM, CHML and RAB GDP dissociation inhibitor GDI2.

The protein localises to the cell membrane. The protein resides in the golgi apparatus. It catalyses the reaction GTP + H2O = GDP + phosphate + H(+). With respect to regulation, regulated by guanine nucleotide exchange factors (GEFs) which promote the exchange of bound GDP for free GTP. Regulated by GTPase activating proteins (GAPs) which increase the GTP hydrolysis activity. Inhibited by GDP dissociation inhibitors (GDIs) which prevent Rab-GDP dissociation. Functionally, the small GTPases Rab are key regulators of intracellular membrane trafficking, from the formation of transport vesicles to their fusion with membranes. Rabs cycle between an inactive GDP-bound form and an active GTP-bound form that is able to recruit to membranes different sets of downstream effectors directly responsible for vesicle formation, movement, tethering and fusion. The chain is Ras-related protein Rab-3B (RAB3B) from Bos taurus (Bovine).